Reading from the N-terminus, the 353-residue chain is Farnesyl pyrophosphate synthase (353 aa).

The isopentenyl diphosphate site is built by Lys-57, Arg-60, and Gln-96. An N6-(2-hydroxyisobutyryl)lysine; alternate modification is found at Lys-57. Lys-57 is subject to N6-acetyllysine; alternate. Residues Asp-103 and Asp-107 each coordinate Mg(2+). Residue Arg-112 coordinates dimethylallyl diphosphate. An isopentenyl diphosphate-binding site is contributed by Arg-113. Dimethylallyl diphosphate contacts are provided by Lys-200, Thr-201, Gln-240, Lys-257, and Lys-266.

The protein belongs to the FPP/GGPP synthase family. As to quaternary structure, homodimer. Interacts with RSAD2. Interacts with bovine leukemia virus (BLV) protein G4. Mg(2+) serves as cofactor.

It localises to the cytoplasm. It carries out the reaction isopentenyl diphosphate + dimethylallyl diphosphate = (2E)-geranyl diphosphate + diphosphate. The enzyme catalyses isopentenyl diphosphate + (2E)-geranyl diphosphate = (2E,6E)-farnesyl diphosphate + diphosphate. The protein operates within isoprenoid biosynthesis; farnesyl diphosphate biosynthesis; farnesyl diphosphate from geranyl diphosphate and isopentenyl diphosphate: step 1/1. It participates in isoprenoid biosynthesis; geranyl diphosphate biosynthesis; geranyl diphosphate from dimethylallyl diphosphate and isopentenyl diphosphate: step 1/1. Inactivated by interferon-induced RSAD2. This inactivation may result of disruption of lipid rafts at the plasma membrane, and thus have an antiviral effect since many enveloped viruses need lipid rafts to bud efficiently out of the cell. Its function is as follows. Key enzyme in isoprenoid biosynthesis which catalyzes the formation of farnesyl diphosphate (FPP), a precursor for several classes of essential metabolites including sterols, dolichols, carotenoids, and ubiquinones. FPP also serves as substrate for protein farnesylation and geranylgeranylation. Catalyzes the sequential condensation of isopentenyl pyrophosphate with the allylic pyrophosphates, dimethylallyl pyrophosphate, and then with the resultant geranylpyrophosphate to the ultimate product farnesyl pyrophosphate. In Bos taurus (Bovine), this protein is Farnesyl pyrophosphate synthase (FDPS).